The chain runs to 127 residues: Small ribosomal subunit protein uS11 (127 aa).

It belongs to the universal ribosomal protein uS11 family. In terms of assembly, part of the 30S ribosomal subunit. Interacts with proteins S7 and S18. Binds to IF-3.

In terms of biological role, located on the platform of the 30S subunit, it bridges several disparate RNA helices of the 16S rRNA. Forms part of the Shine-Dalgarno cleft in the 70S ribosome. The protein is Small ribosomal subunit protein uS11 of Rhodopirellula baltica (strain DSM 10527 / NCIMB 13988 / SH1).